The sequence spans 194 residues: 3-isopropylmalate dehydratase small subunit (194 aa).

It belongs to the LeuD family. LeuD type 1 subfamily. As to quaternary structure, heterodimer of LeuC and LeuD.

The enzyme catalyses (2R,3S)-3-isopropylmalate = (2S)-2-isopropylmalate. It functions in the pathway amino-acid biosynthesis; L-leucine biosynthesis; L-leucine from 3-methyl-2-oxobutanoate: step 2/4. In terms of biological role, catalyzes the isomerization between 2-isopropylmalate and 3-isopropylmalate, via the formation of 2-isopropylmaleate. The protein is 3-isopropylmalate dehydratase small subunit of Leuconostoc mesenteroides subsp. mesenteroides (strain ATCC 8293 / DSM 20343 / BCRC 11652 / CCM 1803 / JCM 6124 / NCDO 523 / NBRC 100496 / NCIMB 8023 / NCTC 12954 / NRRL B-1118 / 37Y).